The primary structure comprises 535 residues: Phosphoenolpyruvate carboxykinase (ATP) (535 aa).

Residues Arg59, Tyr201, and Lys207 each coordinate substrate. Residues Lys207, His226, and 243-251 (GLSGTGKTT) contribute to the ATP site. The Mn(2+) site is built by Lys207 and His226. Asp264 is a Mn(2+) binding site. ATP is bound by residues Glu292, Arg328, 444-445 (RI), and Thr450. Arg328 contributes to the substrate binding site.

It belongs to the phosphoenolpyruvate carboxykinase (ATP) family. Mn(2+) serves as cofactor.

Its subcellular location is the cytoplasm. The catalysed reaction is oxaloacetate + ATP = phosphoenolpyruvate + ADP + CO2. It participates in carbohydrate biosynthesis; gluconeogenesis. In terms of biological role, involved in the gluconeogenesis. Catalyzes the conversion of oxaloacetate (OAA) to phosphoenolpyruvate (PEP) through direct phosphoryl transfer between the nucleoside triphosphate and OAA. This is Phosphoenolpyruvate carboxykinase (ATP) from Bacteroides fragilis (strain ATCC 25285 / DSM 2151 / CCUG 4856 / JCM 11019 / LMG 10263 / NCTC 9343 / Onslow / VPI 2553 / EN-2).